A 306-amino-acid chain; its full sequence is sn-1-specific diacylglycerol lipase ABHD11 (306 aa).

A disordered region spans residues 19–40 (GPSFARVPVAPSSSSGGRGGAE). A compositionally biased stretch (low complexity) spans 23–33 (ARVPVAPSSSS). Residue Lys78 is modified to N6-succinyllysine. Catalysis depends on charge relay system residues Ser132, Asp228, and His287.

It belongs to the AB hydrolase superfamily. As to quaternary structure, interacts with OGDH and DLST; this interaction maintains the functional lipoylation of the 2-oxoglutarate dehydrogenase complex. In terms of processing, phosphorylated. Ubiquitously expressed. Highly expressed in small intestine, prostate and thyroid, while aorta and colon tissues exhibit weak expression levels.

It is found in the mitochondrion. It localises to the mitochondrion matrix. The catalysed reaction is 1-octadecanoyl-2-(5Z,8Z,11Z,14Z-eicosatetraenoyl)-sn-glycerol + H2O = 2-(5Z,8Z,11Z,14Z-eicosatetraenoyl)-glycerol + octadecanoate + H(+). It carries out the reaction a 1,2-diacyl-sn-glycerol + H2O = a 2-acylglycerol + a fatty acid + H(+). The enzyme catalyses a 1,3-diacyl-sn-glycerol + H2O = a 1-acyl-sn-glycerol + a fatty acid + H(+). It catalyses the reaction 1-octadecanoyl-2-(9Z-octadecenoyl)-sn-glycerol + H2O = 2-(9Z-octadecenoyl)-glycerol + octadecanoate + H(+). The catalysed reaction is 1-octadecanoyl-2-(4Z,7Z,10Z,13Z,16Z,19Z-docosahexaenoyl)-sn-glycerol + H2O = 2-(4Z,7Z,10Z,13Z,16Z,19Z-docosahexaenoyl)-glycerol + octadecanoate + H(+). It carries out the reaction 1,2-didecanoylglycerol + H2O = decanoylglycerol + decanoate + H(+). In terms of biological role, catalyzes the hydrolysis of diacylglycerol in vitro and may function as a key regulator in lipid metabolism, namely by regulating the intracellular levels of diacylglycerol. 1,2-diacyl-sn-glycerols are the preferred substrate over 1,3-diacyl-sn-glycerols. The enzyme hydrolyzes stearate in preference to palmitate from the sn-1 position of 1,2-diacyl-sn-glycerols. Maintains the functional lipoylation of the 2-oxoglutarate dehydrogenase complex (OGDHc) through its interaction with the OGDHc by preventing the formation of lipoyl adducts. In addition, is also required for the expansion and differentiation of embryonic stem cells (ESCs). This chain is sn-1-specific diacylglycerol lipase ABHD11, found in Homo sapiens (Human).